We begin with the raw amino-acid sequence, 260 residues long: Methylthioribulose-1-phosphate dehydratase (260 aa).

Residues 1–26 form a disordered region; sequence MTPPTTGLPAENTTDDNDHLVQSDDP. The span at 16-26 shows a compositional bias: basic and acidic residues; the sequence is DNDHLVQSDDP. Cysteine 109 provides a ligand contact to substrate. Positions 127 and 129 each coordinate Zn(2+). Catalysis depends on glutamate 154, which acts as the Proton donor/acceptor. Histidine 211 contacts Zn(2+).

Belongs to the aldolase class II family. MtnB subfamily. The cofactor is Zn(2+).

Its subcellular location is the cytoplasm. The enzyme catalyses 5-(methylsulfanyl)-D-ribulose 1-phosphate = 5-methylsulfanyl-2,3-dioxopentyl phosphate + H2O. The protein operates within amino-acid biosynthesis; L-methionine biosynthesis via salvage pathway; L-methionine from S-methyl-5-thio-alpha-D-ribose 1-phosphate: step 2/6. Its function is as follows. Catalyzes the dehydration of methylthioribulose-1-phosphate (MTRu-1-P) into 2,3-diketo-5-methylthiopentyl-1-phosphate (DK-MTP-1-P). In Podospora anserina (strain S / ATCC MYA-4624 / DSM 980 / FGSC 10383) (Pleurage anserina), this protein is Methylthioribulose-1-phosphate dehydratase.